Consider the following 321-residue polypeptide: Putative sulfotransferase vep-2 (321 aa).

The chain crosses the membrane as a helical span at residues isoleucine 11 to serine 31.

The protein to C.elegans C41C4.1 and C18B2.2.

The protein resides in the membrane. This chain is Putative sulfotransferase vep-2, found in Caenorhabditis elegans.